An 874-amino-acid chain; its full sequence is Oxysterol-binding protein-related protein 5 (874 aa).

The segment at 1–71 is disordered; the sequence is MKEEAFLRRR…PQTPGSATKV (71 aa). S12 is modified (phosphoserine). Residues 93-123 adopt a coiled-coil conformation; it reads VSKKDALKAQKENYRQEKKRATKQLFSALTD. Residues 126–243 form the PH domain; the sequence is VVIMADSLKI…WLDALELALR (118 aa). 2 disordered regions span residues 255-277 and 299-338; these read QGRDGEQGSSPDASPSSLYGLPT and FSDKSERENAEDSDAETQDHSRKTNESGSDLLDSPGGPWR. A compositionally biased stretch (polar residues) spans 261–277; the sequence is QGSSPDASPSSLYGLPT. The segment covering 299–308 has biased composition (basic and acidic residues); it reads FSDKSERENA. A 1,2-diacyl-sn-glycero-3-phospho-(1D-myo-inositol 4-phosphate) is bound by residues 383-388, 445-448, and 477-478; these read LSRVVL, KPYN, and HH. Residues 383-388 and N448 contribute to the a 1,2-diacyl-sn-glycero-3-phospho-L-serine site; that span reads LSRVVL. S503 contributes to the a 1,2-diacyl-sn-glycero-3-phospho-L-serine binding site. The span at 660–684 shows a compositional bias: basic and acidic residues; sequence GDQHKATQEKSVLEEAQRQRAREHQ. 2 disordered regions span residues 660 to 685 and 739 to 798; these read GDQHKATQEKSVLEEAQRQRAREHQQ and GQTT…GGES. A 1,2-diacyl-sn-glycero-3-phospho-(1D-myo-inositol 4-phosphate) is bound by residues K669, E673, and R677. A phosphoserine mark is found at S746 and S749. Positions 754-764 are enriched in basic and acidic residues; the sequence is PSSDRRLRKAS. Positions 765–782 are enriched in polar residues; sequence DQPSGHSQVTESSGSTPE. A helical membrane pass occupies residues 855 to 873; sequence SWFLLCIFLTCQLFINYIL.

This sequence belongs to the OSBP family.

Its subcellular location is the endoplasmic reticulum membrane. Its function is as follows. Lipid transporter involved in lipid countertransport between the endoplasmic reticulum and the plasma membrane: specifically exchanges phosphatidylserine with phosphatidylinositol 4-phosphate (PI4P), delivering phosphatidylserine to the plasma membrane in exchange for PI4P, which is degraded by the SAC1/SACM1L phosphatase in the endoplasmic reticulum. Binds phosphatidylserine and PI4P in a mutually exclusive manner. May cooperate with NPC1 to mediate the exit of cholesterol from endosomes/lysosomes. Binds 25-hydroxycholesterol and cholesterol. The chain is Oxysterol-binding protein-related protein 5 (Osbpl5) from Mus musculus (Mouse).